We begin with the raw amino-acid sequence, 690 residues long: SWI/SNF-related matrix-associated actin-dependent regulator of chromatin subfamily A-like protein 1 homolog (690 aa).

Residues 30–49 (MQAAANATASTSSAAPPAPP) are disordered. The segment covering 31–44 (QAAANATASTSSAA) has biased composition (low complexity). One can recognise an HARP domain in the interval 92–170 (PTSLIKPTIG…AVKVELEPLP (79 aa)). The 159-residue stretch at 209-367 (IFALERDGRI…FTQIRLIDHK (159 aa)) folds into the Helicase ATP-binding domain. Residue 222–229 (DEMGLGKS) coordinates ATP. A DESH box motif is present at residues 316–319 (DESH). The short motif at 411–428 (RRLKADVLKDLPEKRREV) is the Nuclear localization signal element. Positions 482 to 639 (ILENYFYPDA…TFRTADKMHL (158 aa)) constitute a Helicase C-terminal domain.

This sequence belongs to the SNF2/RAD54 helicase family. SMARCAL1 subfamily.

It is found in the nucleus. The catalysed reaction is ATP + H2O = ADP + phosphate + H(+). Functionally, ATP-dependent annealing helicase that catalyzes the rewinding of the stably unwound DNA. In Caenorhabditis elegans, this protein is SWI/SNF-related matrix-associated actin-dependent regulator of chromatin subfamily A-like protein 1 homolog.